Reading from the N-terminus, the 236-residue chain is VIGGDECNINEHRFLVALYHSRSRTFLCGGTLINQEWVLTAAHCDRFFMYIRLGMHNKNVNFDDEQRRSPKEKYFFRCSNNFTKWDKDIMLIRLDSPVNNSAHIAPLSLPSNPPSVGSVCRVMGWGQTTSPQEDLSDVPRCANINLFNFTVCRAAYPWLPATSRVLCAGDMEGGIDTCNRDSGGPLICNGQFQGIVSKGQNLCAQPRKPALYTKVFDHLDWIQSIIAGNKTVTCPP.

Positions 1 to 227 constitute a Peptidase S1 domain; sequence VIGGDECNIN…HLDWIQSIIA (227 aa). 6 disulfide bridges follow: C7–C141, C28–C44, C78–C234, C120–C188, C152–C167, and C178–C203. H43 acts as the Charge relay system in catalysis. A glycan (N-linked (GlcNAc...) asparagine) is linked at N81. The active-site Charge relay system is the D88. Residues N99 and N148 are each glycosylated (N-linked (GlcNAc...) asparagine). S182 acts as the Charge relay system in catalysis. An N-linked (GlcNAc...) asparagine glycan is attached at N229.

This sequence belongs to the peptidase S1 family. Snake venom subfamily. As to quaternary structure, monomer. N-glycosylated by units composed of Fuc, Man, GlcNAc, Gal and NeuAC residues. As to expression, expressed by the venom gland.

The protein localises to the secreted. With respect to regulation, inhibited by 4-(2-aminoethyl)-benzensulfonyl fluoride. Not inhibited by antithrombin-III. Thrombin-like snake venom serine protease. Cleaves bonds after Arg and Lys, converts fibrinogen (FGA and FGB) to fibrin and releases both fibrinopeptides A and B, and fibrinogen peptide Bbeta1-42. Has a blood clotting activity. The sequence is that of Thrombin-like enzyme kangshuanmei from Gloydius brevicauda (Korean slamosa snake).